Consider the following 92-residue polypeptide: RIIa domain-containing protein 1 (92 aa).

Residues 43-77 (KEVEWLISGFFREIFLKRPDNILEFAADYFTDPRL) enclose the RIIa domain.

This chain is RIIa domain-containing protein 1 (RIIAD1), found in Homo sapiens (Human).